Consider the following 314-residue polypeptide: Elongator complex protein 5 (314 aa).

The protein belongs to the ELP5 family. Component of the elongator complex.

The protein localises to the cytoplasm. Its subcellular location is the nucleus. It participates in tRNA modification; 5-methoxycarbonylmethyl-2-thiouridine-tRNA biosynthesis. Its function is as follows. Component of the elongator complex, a multiprotein complex which is required for multiple tRNA modifications, including mcm5U (5-methoxycarbonylmethyl uridine), mcm5s2U (5-methoxycarbonylmethyl-2-thiouridine), and ncm5U (5-carbamoylmethyl uridine). The elongator complex catalyzes formation of carboxymethyluridine in the wobble base at position 34 in tRNAs. This is Elongator complex protein 5 (iki1) from Schizosaccharomyces pombe (strain 972 / ATCC 24843) (Fission yeast).